The primary structure comprises 346 residues: Methylthioribose-1-phosphate isomerase (346 aa).

Substrate-binding positions include 46–48 (RGA), Arg89, and Gln196. The active-site Proton donor is the Asp237. Substrate is bound at residue 247–248 (NK).

It belongs to the eIF-2B alpha/beta/delta subunits family. MtnA subfamily.

It carries out the reaction 5-(methylsulfanyl)-alpha-D-ribose 1-phosphate = 5-(methylsulfanyl)-D-ribulose 1-phosphate. It functions in the pathway amino-acid biosynthesis; L-methionine biosynthesis via salvage pathway; L-methionine from S-methyl-5-thio-alpha-D-ribose 1-phosphate: step 1/6. In terms of biological role, catalyzes the interconversion of methylthioribose-1-phosphate (MTR-1-P) into methylthioribulose-1-phosphate (MTRu-1-P). This Citrifermentans bemidjiense (strain ATCC BAA-1014 / DSM 16622 / JCM 12645 / Bem) (Geobacter bemidjiensis) protein is Methylthioribose-1-phosphate isomerase.